The chain runs to 245 residues: Ubiquinone/menaquinone biosynthesis C-methyltransferase UbiE (245 aa).

Residues Thr71, Asp92, and Asp118 to Ala119 contribute to the S-adenosyl-L-methionine site.

This sequence belongs to the class I-like SAM-binding methyltransferase superfamily. MenG/UbiE family.

The catalysed reaction is a 2-demethylmenaquinol + S-adenosyl-L-methionine = a menaquinol + S-adenosyl-L-homocysteine + H(+). It carries out the reaction a 2-methoxy-6-(all-trans-polyprenyl)benzene-1,4-diol + S-adenosyl-L-methionine = a 5-methoxy-2-methyl-3-(all-trans-polyprenyl)benzene-1,4-diol + S-adenosyl-L-homocysteine + H(+). It functions in the pathway quinol/quinone metabolism; menaquinone biosynthesis; menaquinol from 1,4-dihydroxy-2-naphthoate: step 2/2. The protein operates within cofactor biosynthesis; ubiquinone biosynthesis. Functionally, methyltransferase required for the conversion of demethylmenaquinol (DMKH2) to menaquinol (MKH2) and the conversion of 2-polyprenyl-6-methoxy-1,4-benzoquinol (DDMQH2) to 2-polyprenyl-3-methyl-6-methoxy-1,4-benzoquinol (DMQH2). The protein is Ubiquinone/menaquinone biosynthesis C-methyltransferase UbiE of Neisseria meningitidis serogroup C (strain 053442).